The following is a 145-amino-acid chain: Trafficking protein particle complex subunit 1 (145 aa).

Belongs to the TRAPP small subunits family. BET5 subfamily. As to quaternary structure, part of the multisubunit transport protein particle (TRAPP) complex. The heterodimer TRAPPC6B-TRAPPC3 interacts with TRAPPC1 likely providing a core for TRAPP complex formation.

It localises to the golgi apparatus. It is found in the cis-Golgi network. Its subcellular location is the endoplasmic reticulum. Its function is as follows. May play a role in vesicular transport from endoplasmic reticulum to Golgi. The polypeptide is Trafficking protein particle complex subunit 1 (TRAPPC1) (Bos taurus (Bovine)).